A 576-amino-acid polypeptide reads, in one-letter code: Adenine deaminase 2 (576 aa).

The protein belongs to the metallo-dependent hydrolases superfamily. Adenine deaminase family. Mn(2+) serves as cofactor.

It carries out the reaction adenine + H2O + H(+) = hypoxanthine + NH4(+). This is Adenine deaminase 2 from Desulfotalea psychrophila (strain LSv54 / DSM 12343).